Reading from the N-terminus, the 332-residue chain is 2,3-diketo-L-gulonate reductase (332 aa).

The Proton donor role is filled by His44. NAD(+)-binding positions include 168-174 (ITMVDMS), 224-225 (WK), and 304-306 (GHE).

Belongs to the LDH2/MDH2 oxidoreductase family. DlgD subfamily. As to quaternary structure, homodimer.

The protein localises to the cytoplasm. The catalysed reaction is 3-dehydro-L-gulonate + NAD(+) = 2,3-dioxo-L-gulonate + NADH + H(+). The enzyme catalyses 3-dehydro-L-gulonate + NADP(+) = 2,3-dioxo-L-gulonate + NADPH + H(+). Its function is as follows. Catalyzes the reduction of 2,3-diketo-L-gulonate in the presence of NADH, to form 3-keto-L-gulonate. This chain is 2,3-diketo-L-gulonate reductase, found in Salmonella heidelberg (strain SL476).